The chain runs to 31 residues: Acetyl-CoA carboxylase (31 aa).

The segment at 1–31 (RISSSVIAHKTQLDSGKREVYSSHMQLGGPK) is disordered. Residues 11-21 (TQLDSGKREVY) are compositionally biased toward basic and acidic residues.

It carries out the reaction hydrogencarbonate + acetyl-CoA + ATP = malonyl-CoA + ADP + phosphate + H(+). Its pathway is lipid metabolism; malonyl-CoA biosynthesis; malonyl-CoA from acetyl-CoA: step 1/1. The protein is Acetyl-CoA carboxylase of Catharanthus roseus (Madagascar periwinkle).